A 75-amino-acid polypeptide reads, in one-letter code: Signaling peptide TAXIMIN 1 (75 aa).

The first 29 residues, 1–29 (MCDGDCRPLGFLLGLPFAFLSLLLSIIGV), serve as a signal peptide directing secretion.

In terms of tissue distribution, expressed in shoot apical meristems (SAM); mostly specific to the L1 layer in the center of the meristem but also detected in the L2 layer in organ primordia. Also observed in the vasculature of seedling roots.

Its subcellular location is the secreted. With respect to regulation, counteracted by the antibiotic cefotaxime during responses to light stress. Signaling peptide involved in the regulation of lateral organs separation, including fruits and leaves. Involved in the perception of and response to light stress via the control of sinapoyl-malate accumulation, a UV-B protecting compound. The protein is Signaling peptide TAXIMIN 1 of Arabidopsis thaliana (Mouse-ear cress).